Here is a 101-residue protein sequence, read N- to C-terminus: Translation initiation factor IF-1, chloroplastic (101 aa).

Polar residues predominate over residues 1 to 10; it reads MNQLKKSFSP. The tract at residues 1 to 35 is disordered; sequence MNQLKKSFSPTEGKKDQNNLINDPQKNKQKKQKKL. The 76-residue stretch at 26 to 101 folds into the S1-like domain; sequence KNKQKKQKKL…TKGRITYRHR (76 aa).

This sequence belongs to the IF-1 family. As to quaternary structure, component of the 30S ribosomal translation pre-initiation complex which assembles on the 30S ribosome in the order IF-2 and IF-3, IF-1 and N-formylmethionyl-tRNA(fMet); mRNA recruitment can occur at any time during PIC assembly.

It is found in the plastid. The protein localises to the chloroplast. Its function is as follows. One of the essential components for the initiation of protein synthesis. Stabilizes the binding of IF-2 and IF-3 on the 30S subunit to which N-formylmethionyl-tRNA(fMet) subsequently binds. Helps modulate mRNA selection, yielding the 30S pre-initiation complex (PIC). Upon addition of the 50S ribosomal subunit IF-1, IF-2 and IF-3 are released leaving the mature 70S translation initiation complex. This Tetradesmus obliquus (Green alga) protein is Translation initiation factor IF-1, chloroplastic.